Consider the following 229-residue polypeptide: Ribonuclease 3 (229 aa).

The RNase III domain occupies 5-127 (LDRLERKLGY…LIGAIYLDTG (123 aa)). Glutamate 40 is a Mg(2+) binding site. The active site involves aspartate 44. The Mg(2+) site is built by aspartate 113 and glutamate 116. The active site involves glutamate 116. The DRBM domain maps to 154-224 (DPKTRLQEFL…AAAALVALGV (71 aa)).

The protein belongs to the ribonuclease III family. Homodimer. The cofactor is Mg(2+).

It localises to the cytoplasm. It catalyses the reaction Endonucleolytic cleavage to 5'-phosphomonoester.. Functionally, digests double-stranded RNA. Involved in the processing of primary rRNA transcript to yield the immediate precursors to the large and small rRNAs (23S and 16S). Processes some mRNAs, and tRNAs when they are encoded in the rRNA operon. Processes pre-crRNA and tracrRNA of type II CRISPR loci if present in the organism. In Pseudomonas paraeruginosa (strain DSM 24068 / PA7) (Pseudomonas aeruginosa (strain PA7)), this protein is Ribonuclease 3.